Consider the following 101-residue polypeptide: Urease subunit beta (101 aa).

The protein belongs to the urease beta subunit family. In terms of assembly, heterotrimer of UreA (gamma), UreB (beta) and UreC (alpha) subunits. Three heterotrimers associate to form the active enzyme.

It localises to the cytoplasm. It carries out the reaction urea + 2 H2O + H(+) = hydrogencarbonate + 2 NH4(+). It participates in nitrogen metabolism; urea degradation; CO(2) and NH(3) from urea (urease route): step 1/1. The chain is Urease subunit beta from Bradyrhizobium diazoefficiens (strain JCM 10833 / BCRC 13528 / IAM 13628 / NBRC 14792 / USDA 110).